The primary structure comprises 331 residues: NmrA-like family domain-containing oxidoreductase himF (331 aa).

NADP(+)-binding positions include 8–13 (GATGNQ), 34–38 (RNAES), 55–56 (DG), 76–78 (TNG), Lys133, and 155–167 (WFFE…QMAA).

Belongs to the NmrA-type oxidoreductase family.

Its pathway is secondary metabolite biosynthesis. Its function is as follows. NmrA-like family domain-containing oxidoreductase; part of the him gene cluster that mediates the biosynthesis of himeic acid A, a ubiquitin-activating enzyme (E1) inhibitor. First, himA, together with the trans-enoyl reductase himH, catalyzes the formation of apolyketide chain, which is then condensed with leucine by the NRPS activity of himA. Dieckmann cyclization and release from himA gives a tetramic acid intermediate as the product of himA PKS-NRPS. HimG then catalyzes alpha-oxidation of the tetramic acid ring, with a subsequent rearrangement to yield apyrone intermediate. Two terminal methyl groups of polyketide and amide side chains are oxidized to carboxylic acids by himC cytochrome P450 monooxygenase to form himeic acid A. Himeic acid A is further converted to himeic acid B and C during culture growth. No gene responsible for pyrone to pyridone conversion was found in the him gene cluster and himeic acid A is non-enzymatically converted to himeic acid C by the incorporation of an ammonium nitrogen atom in a pH5 buffer, and to himeic acid B at a conversion ratio of 50% during incubation in MeOH for 5 days. The sequence is that of NmrA-like family domain-containing oxidoreductase himF from Aspergillus japonicus.